We begin with the raw amino-acid sequence, 434 residues long: Xylose isomerase (434 aa).

Residues His100 and Asp103 contribute to the active site. Residues Glu231, Glu267, His270, Asp295, Asp306, Asp308, and Asp338 each coordinate Mg(2+).

The protein belongs to the xylose isomerase family. Homotetramer. It depends on Mg(2+) as a cofactor.

The protein localises to the cytoplasm. It catalyses the reaction alpha-D-xylose = alpha-D-xylulofuranose. The sequence is that of Xylose isomerase from Ruegeria pomeroyi (strain ATCC 700808 / DSM 15171 / DSS-3) (Silicibacter pomeroyi).